Here is a 95-residue protein sequence, read N- to C-terminus: Protein TusB (95 aa).

It belongs to the DsrH/TusB family. In terms of assembly, heterohexamer, formed by a dimer of trimers. The hexameric TusBCD complex contains 2 copies each of TusB, TusC and TusD. The TusBCD complex interacts with TusE.

The protein localises to the cytoplasm. Part of a sulfur-relay system required for 2-thiolation of 5-methylaminomethyl-2-thiouridine (mnm(5)s(2)U) at tRNA wobble positions. This is Protein TusB from Salmonella dublin (strain CT_02021853).